We begin with the raw amino-acid sequence, 173 residues long: NADH-ubiquinone oxidoreductase chain 6 (173 aa).

The next 6 helical transmembrane spans lie at 1–21, 27–47, 48–68, 87–107, 113–133, and 139–159; these read MTYF…AVAS, YGVV…LSLG, VSFV…VVFV, VVGY…VGGF, FGVI…FGGV, and CGVG…FVVL.

Belongs to the complex I subunit 6 family.

The protein resides in the mitochondrion membrane. It catalyses the reaction a ubiquinone + NADH + 5 H(+)(in) = a ubiquinol + NAD(+) + 4 H(+)(out). Its function is as follows. Core subunit of the mitochondrial membrane respiratory chain NADH dehydrogenase (Complex I) that is believed to belong to the minimal assembly required for catalysis. Complex I functions in the transfer of electrons from NADH to the respiratory chain. The immediate electron acceptor for the enzyme is believed to be ubiquinone. This is NADH-ubiquinone oxidoreductase chain 6 (MT-ND6) from Alle alle (Dovekie).